Consider the following 119-residue polypeptide: Large ribosomal subunit protein bL19 (119 aa).

It belongs to the bacterial ribosomal protein bL19 family.

Its function is as follows. This protein is located at the 30S-50S ribosomal subunit interface and may play a role in the structure and function of the aminoacyl-tRNA binding site. The chain is Large ribosomal subunit protein bL19 (rplS) from Mycoplasma genitalium (strain ATCC 33530 / DSM 19775 / NCTC 10195 / G37) (Mycoplasmoides genitalium).